The primary structure comprises 101 residues: Precursor of CEP6 (101 aa).

Positions 1-26 are cleaved as a signal peptide; that stretch reads MKLSVYIILSILFISTVFYEIQFTEA. Residues 27–48 constitute a propeptide that is removed on maturation; that stretch reads RQLRKTDDQDHDDHHFTVGYTD. The segment covering 29–42 has biased composition (basic and acidic residues); that stretch reads LRKTDDQDHDDHHF. Residues 29–101 form a disordered region; that stretch reads LRKTDDQDHD…HAVKNNEPNA (73 aa). Residues proline 52, proline 55, and proline 59 each carry the hydroxyproline modification. Residues 64–77 constitute a propeptide that is removed on maturation; it reads KMKENEENAGGYKD. Positions 64-79 are enriched in basic and acidic residues; the sequence is KMKENEENAGGYKDDF. Hydroxyproline occurs at positions 81, 84, and 88. Positions 93–101 are excised as a propeptide; sequence AVKNNEPNA.

It belongs to the C-terminally encoded plant signaling peptide (CEP) family. In terms of assembly, interacts with CEP receptors (e.g. CEPR1 and CEPR2). In terms of processing, the mature small signaling peptide is generated by proteolytic processing of the longer precursor. As to expression, expressed in lateral root primordia and in lateral roots excluding the meristem region. Also present in the aerial tissues, such as leaf petioles and the shoot apex region.

It localises to the secreted. The protein resides in the extracellular space. Its subcellular location is the apoplast. Its function is as follows. Extracellular signaling peptide that represses primary root growth rate. Modulates leaf morphology. Regulates systemic nitrogen (N)-demand signaling. Mediates up-regulation of genes involved in N uptake and assimilation pathways. The polypeptide is Precursor of CEP6 (Arabidopsis thaliana (Mouse-ear cress)).